Consider the following 169-residue polypeptide: Ureidoglycolate lyase (169 aa).

It belongs to the ureidoglycolate lyase family. As to quaternary structure, homodimer. Requires Ni(2+) as cofactor.

It catalyses the reaction (S)-ureidoglycolate = urea + glyoxylate. It participates in nitrogen metabolism; (S)-allantoin degradation. Catalyzes the catabolism of the allantoin degradation intermediate (S)-ureidoglycolate, generating urea and glyoxylate. Involved in the utilization of allantoin as nitrogen source. In Brucella anthropi (strain ATCC 49188 / DSM 6882 / CCUG 24695 / JCM 21032 / LMG 3331 / NBRC 15819 / NCTC 12168 / Alc 37) (Ochrobactrum anthropi), this protein is Ureidoglycolate lyase.